A 258-amino-acid polypeptide reads, in one-letter code: Imidazole glycerol phosphate synthase subunit HisF (258 aa).

Active-site residues include Asp11 and Asp130.

This sequence belongs to the HisA/HisF family. In terms of assembly, heterodimer of HisH and HisF.

Its subcellular location is the cytoplasm. It catalyses the reaction 5-[(5-phospho-1-deoxy-D-ribulos-1-ylimino)methylamino]-1-(5-phospho-beta-D-ribosyl)imidazole-4-carboxamide + L-glutamine = D-erythro-1-(imidazol-4-yl)glycerol 3-phosphate + 5-amino-1-(5-phospho-beta-D-ribosyl)imidazole-4-carboxamide + L-glutamate + H(+). Its pathway is amino-acid biosynthesis; L-histidine biosynthesis; L-histidine from 5-phospho-alpha-D-ribose 1-diphosphate: step 5/9. Functionally, IGPS catalyzes the conversion of PRFAR and glutamine to IGP, AICAR and glutamate. The HisF subunit catalyzes the cyclization activity that produces IGP and AICAR from PRFAR using the ammonia provided by the HisH subunit. This chain is Imidazole glycerol phosphate synthase subunit HisF, found in Bradyrhizobium sp. (strain BTAi1 / ATCC BAA-1182).